Reading from the N-terminus, the 289-residue chain is MITVRTIPELRAAIAAHPGAGRPGKRPAFVPTMGNLHDGHIALVRQARPLGDVLVASIFVNRLQFLPHEDFDSYPRTWEADCAKLEAAGCDIVFAPRESDLYPEPQTFKLQPDPQLADILEGHFRPGFFTGVCTVVMKLFSAVFFASGGGTAVFGKKDYQQLMVIRRMVQQFALPVEVVAGETARADDGLALSSRNGYLSTAERVQAVQLSAALRALAQAAQAPGAPPLAALEQQALQTLAQQGWAPDYLTVRQRHDLQPPAAGAAAGTLVALGAARLGSTRLIDNLEF.

33-40 (MGNLHDGH) serves as a coordination point for ATP. Catalysis depends on histidine 40, which acts as the Proton donor. (R)-pantoate is bound at residue glutamine 64. Glutamine 64 is a binding site for beta-alanine. 155–158 (GKKD) contributes to the ATP binding site. Glutamine 161 contributes to the (R)-pantoate binding site. ATP contacts are provided by residues alanine 184 and 192-195 (LSSR).

The protein belongs to the pantothenate synthetase family. In terms of assembly, homodimer.

It is found in the cytoplasm. The catalysed reaction is (R)-pantoate + beta-alanine + ATP = (R)-pantothenate + AMP + diphosphate + H(+). Its pathway is cofactor biosynthesis; (R)-pantothenate biosynthesis; (R)-pantothenate from (R)-pantoate and beta-alanine: step 1/1. Its function is as follows. Catalyzes the condensation of pantoate with beta-alanine in an ATP-dependent reaction via a pantoyl-adenylate intermediate. This chain is Pantothenate synthetase, found in Acidovorax sp. (strain JS42).